A 248-amino-acid polypeptide reads, in one-letter code: tRNA pseudouridine synthase A (248 aa).

Catalysis depends on aspartate 53, which acts as the Nucleophile. Tyrosine 111 lines the substrate pocket.

The protein belongs to the tRNA pseudouridine synthase TruA family. Homodimer.

It catalyses the reaction uridine(38/39/40) in tRNA = pseudouridine(38/39/40) in tRNA. Functionally, formation of pseudouridine at positions 38, 39 and 40 in the anticodon stem and loop of transfer RNAs. This Listeria monocytogenes serovar 1/2a (strain ATCC BAA-679 / EGD-e) protein is tRNA pseudouridine synthase A.